The following is a 248-amino-acid chain: 5'-nucleotidase SurE (248 aa).

Residues Asp-8, Asp-9, Ser-39, and Asn-91 each contribute to the a divalent metal cation site.

This sequence belongs to the SurE nucleotidase family. The cofactor is a divalent metal cation.

Its subcellular location is the cytoplasm. The catalysed reaction is a ribonucleoside 5'-phosphate + H2O = a ribonucleoside + phosphate. Functionally, nucleotidase that shows phosphatase activity on nucleoside 5'-monophosphates. This chain is 5'-nucleotidase SurE, found in Citrifermentans bemidjiense (strain ATCC BAA-1014 / DSM 16622 / JCM 12645 / Bem) (Geobacter bemidjiensis).